A 409-amino-acid polypeptide reads, in one-letter code: Small ribosomal subunit protein mS47 (409 aa).

Residues 1-26 constitute a mitochondrion transit peptide; sequence MQTVKALRRVSEPLQWVRSVSYGRRF. Residues 388 to 409 form a disordered region; sequence ASELDDSDSELKLPTAQREPYF.

Belongs to the enoyl-CoA hydratase/isomerase family. Mitochondrion-specific ribosomal protein mS47 subfamily. As to quaternary structure, component of the mitochondrial ribosome small subunit.

It is found in the mitochondrion. The protein is Small ribosomal subunit protein mS47 of Arabidopsis thaliana (Mouse-ear cress).